The following is a 413-amino-acid chain: Gamma-glutamyl phosphate reductase (413 aa).

It belongs to the gamma-glutamyl phosphate reductase family.

It localises to the cytoplasm. The enzyme catalyses L-glutamate 5-semialdehyde + phosphate + NADP(+) = L-glutamyl 5-phosphate + NADPH + H(+). It participates in amino-acid biosynthesis; L-proline biosynthesis; L-glutamate 5-semialdehyde from L-glutamate: step 2/2. Functionally, catalyzes the NADPH-dependent reduction of L-glutamate 5-phosphate into L-glutamate 5-semialdehyde and phosphate. The product spontaneously undergoes cyclization to form 1-pyrroline-5-carboxylate. In Lactococcus lactis subsp. cremoris (strain SK11), this protein is Gamma-glutamyl phosphate reductase.